The following is a 249-amino-acid chain: Probable transglycosylase SceD 2 (249 aa).

Residues 1 to 27 (MKKTVIASTLAVGLGVTGIAAGNSADA) form the signal peptide. Composition is skewed to low complexity over residues 80 to 95 (WSYG…ASSE) and 103 to 171 (QQTA…SSSS). Residues 80–203 (WSYGEGSGEG…PSSGASGKFQ (124 aa)) form a disordered region. 2 stretches are compositionally biased toward polar residues: residues 172–182 (GVNAHLQQIAQ) and 192–203 (TNPSSGASGKFQ).

The protein belongs to the transglycosylase family. SceD subfamily.

It localises to the secreted. Its function is as follows. Is able to cleave peptidoglycan and affects clumping and separation of bacterial cells. The sequence is that of Probable transglycosylase SceD 2 (sceD2) from Staphylococcus saprophyticus subsp. saprophyticus (strain ATCC 15305 / DSM 20229 / NCIMB 8711 / NCTC 7292 / S-41).